We begin with the raw amino-acid sequence, 20 residues long: Phylloseptin-O1 (20 aa).

Gly20 is subject to Glycine amide.

In terms of tissue distribution, expressed by the skin glands.

It localises to the secreted. Functionally, has antiprotozoal activity against T.cruzi. The polypeptide is Phylloseptin-O1 (psn4) (Pithecopus oreades (Orange-legged leaf frog)).